The chain runs to 130 residues: Small ribosomal subunit protein uS8 (130 aa).

Belongs to the universal ribosomal protein uS8 family. In terms of assembly, part of the 30S ribosomal subunit. Contacts proteins S5 and S12.

Its function is as follows. One of the primary rRNA binding proteins, it binds directly to 16S rRNA central domain where it helps coordinate assembly of the platform of the 30S subunit. The chain is Small ribosomal subunit protein uS8 from Onion yellows phytoplasma (strain OY-M).